The sequence spans 160 residues: Nucleotide-binding protein CJA_2652 (160 aa).

This sequence belongs to the YajQ family.

Nucleotide-binding protein. This chain is Nucleotide-binding protein CJA_2652, found in Cellvibrio japonicus (strain Ueda107) (Pseudomonas fluorescens subsp. cellulosa).